The sequence spans 344 residues: Arginine N-succinyltransferase (344 aa).

Leu-125 lines the succinyl-CoA pocket. His-229 functions as the Proton donor in the catalytic mechanism.

Belongs to the arginine N-succinyltransferase family.

It catalyses the reaction succinyl-CoA + L-arginine = N(2)-succinyl-L-arginine + CoA + H(+). It participates in amino-acid degradation; L-arginine degradation via AST pathway; L-glutamate and succinate from L-arginine: step 1/5. Catalyzes the transfer of succinyl-CoA to arginine to produce N(2)-succinylarginine. In Shigella boydii serotype 4 (strain Sb227), this protein is Arginine N-succinyltransferase.